We begin with the raw amino-acid sequence, 378 residues long: Pyrimidine monooxygenase RutA (378 aa).

FMN contacts are provided by residues 65-66 (IK), Asn131, Glu140, 156-157 (RY), and Ser206.

It belongs to the NtaA/SnaA/DszA monooxygenase family. RutA subfamily.

The catalysed reaction is uracil + FMNH2 + NADH + O2 = (Z)-3-ureidoacrylate + FMN + NAD(+) + H2O + H(+). It catalyses the reaction thymine + FMNH2 + NADH + O2 = (Z)-2-methylureidoacrylate + FMN + NAD(+) + H2O + H(+). Its function is as follows. Catalyzes the pyrimidine ring opening between N-3 and C-4 by an unusual flavin hydroperoxide-catalyzed mechanism, adding oxygen atoms in the process to yield ureidoacrylate peracid, that immediately reacts with FMN forming ureidoacrylate and FMN-N(5)-oxide. The FMN-N(5)-oxide reacts spontaneously with NADH to produce FMN. Requires the flavin reductase RutF to regenerate FMN in vivo. The protein is Pyrimidine monooxygenase RutA of Cronobacter turicensis (strain DSM 18703 / CCUG 55852 / LMG 23827 / z3032).